A 146-amino-acid chain; its full sequence is Snaclec coagulation factor IX/factor X-binding protein subunit B2 (146 aa).

Residues 1 to 23 form the signal peptide; sequence MGRLIFVSFGLLVVFLSLSGTAA. 3 cysteine pairs are disulfide-bonded: C25–C36, C53–C142, and C119–C134. Residues 32 to 143 enclose the C-type lectin domain; sequence YEGHCYKPFN…CRMMANFVCE (112 aa).

Belongs to the snaclec family. Heterodimer of subunits A and B2; disulfide-linked. As to expression, expressed by the venom gland.

The protein localises to the secreted. In terms of biological role, anticoagulant protein which binds to the gamma-carboxyglutamic acid-domain regions of factors IX (F9) and factor X (F10) in the presence of calcium with a 1 to 1 stoichiometry. The sequence is that of Snaclec coagulation factor IX/factor X-binding protein subunit B2 from Trimeresurus stejnegeri (Chinese green tree viper).